The sequence spans 307 residues: MSSLIKSINLDKINHSQSTVKDYILLMKPRVMSLVIFTCFVGMLLAPYSVHPFIASIAVVCIAFGAGSAGAINMWYDRDIDSLMKRTQKRPIVRGAIEPDEALSFGLITGFFAVFFMALCVNLLASFLLLFTIFYYICIYTIWLKRRSIQNIVIGGVSGALPPVIGYAAVSNTISLQSVILFLIILIWTPPHSWALALFCNEDYKNCKVPMMPTIKGALYAKKQILIYSFLLFIVSLMPFFIGMSNFIYLIISGILGLVFLYYAGSLFYDTPDNKQAKRLFVYSIFYLFFIFLLLYLTNTILSISER.

9 helical membrane passes run 31–51 (VMSL…YSVH), 52–72 (PFIA…AGAI), 102–119 (ALSF…FMAL), 123–145 (LLAS…IWLK), 151–171 (NIVI…AAVS), 179–199 (VILF…LALF), 225–245 (ILIY…IGMS), 247–267 (FIYL…AGSL), and 281–301 (FVYS…TNTI).

This sequence belongs to the UbiA prenyltransferase family. Protoheme IX farnesyltransferase subfamily.

The protein resides in the cell inner membrane. The catalysed reaction is heme b + (2E,6E)-farnesyl diphosphate + H2O = Fe(II)-heme o + diphosphate. It participates in porphyrin-containing compound metabolism; heme O biosynthesis; heme O from protoheme: step 1/1. Its function is as follows. Converts heme B (protoheme IX) to heme O by substitution of the vinyl group on carbon 2 of heme B porphyrin ring with a hydroxyethyl farnesyl side group. The sequence is that of Protoheme IX farnesyltransferase from Rickettsia canadensis (strain McKiel).